An 873-amino-acid chain; its full sequence is DNA mismatch repair protein PMS1 (873 aa).

The DNA- and ATP-binding stretch occupies residues 1-357 (MTQIHQINDI…FKTTLSDYYN (357 aa)). Residues 379–402 (LKTEVFDDRSTTHESDNENYHTAR) show a composition bias toward basic and acidic residues. The disordered stretch occupies residues 379-423 (LKTEVFDDRSTTHESDNENYHTARSESNQSNHAHFNSTTGVIDKS). A Phosphoserine modification is found at Ser-393. A compositionally biased stretch (polar residues) spans 403-423 (SESNQSNHAHFNSTTGVIDKS). Position 566 is a phosphoserine (Ser-566). The interaction with MLH1 stretch occupies residues 661–873 (YLTLTVSKND…WSSFSKDYEI (213 aa)).

The protein belongs to the DNA mismatch repair MutL/HexB family. As to quaternary structure, heterodimer of MLH1 and PMS1, called MutLalpha, which is the major MMR MutL activity correcting base-base mismatches as well as IDLs. The heterodimer binds double strand DNA independently of a mismatch with positive cooperativity and has more than one DNA binding site. Forms a ternary complex with either the MSH2-MSH6 (MutSalpha) or the MSH2-MSH3 heterodimer (MutSbeta), which recognize and bind to mismatch DNA. Ternary complex formation is promoted by ATP binding.

The protein resides in the nucleus. Functionally, required for DNA mismatch repair (MMR), correcting base-base mismatches and insertion-deletion loops (IDLs) resulting from DNA replication, DNA damage or from recombination events between non-identical sequences during meiosis. Component of the MutLalpha heterodimer that forms a ternary complex with the MutS heterodimers, which initially recognize the DNA mismatches. This complex is thought to be responsible for directing the downstream MMR events, including strand discrimination, excision, and resynthesis. Plays a major role in maintaining the genetic stability of simple sequence repeats and in the repair of heteroduplex sites present in meiotic recombination intermediates. In Saccharomyces cerevisiae (strain ATCC 204508 / S288c) (Baker's yeast), this protein is DNA mismatch repair protein PMS1 (PMS1).